Consider the following 472-residue polypeptide: Glutamine synthetase (472 aa).

The GS beta-grasp domain maps to 13–101 (SKARFVDLRF…TCDVIDPADG (89 aa)). The GS catalytic domain maps to 108–472 (PRSIARRAEA…PLEFEMYYSL (365 aa)). Residues Glu133 and Glu135 each contribute to the Mg(2+) site. Residue Glu211 participates in ATP binding. Residues Glu216 and Glu224 each contribute to the Mg(2+) site. L-glutamate is bound by residues 268–269 (NG) and Gly269. His273 contacts Mg(2+). Residues 275 to 277 (HQS) and Ser277 contribute to the ATP site. Arg325, Glu331, and Arg343 together coordinate L-glutamate. Arg343, Arg348, and Lys356 together coordinate ATP. Glu361 contributes to the Mg(2+) binding site. Arg363 serves as a coordination point for L-glutamate. Tyr401 carries the post-translational modification O-AMP-tyrosine.

Belongs to the glutamine synthetase family. In terms of assembly, oligomer of 12 subunits arranged in the form of two hexameric ring. Mg(2+) serves as cofactor.

It localises to the cytoplasm. The catalysed reaction is L-glutamate + NH4(+) + ATP = L-glutamine + ADP + phosphate + H(+). With respect to regulation, the activity of this enzyme could be controlled by adenylation under conditions of abundant glutamine. Catalyzes the ATP-dependent biosynthesis of glutamine from glutamate and ammonia. In Neisseria gonorrhoeae, this protein is Glutamine synthetase.